Here is a 414-residue protein sequence, read N- to C-terminus: Isocitrate dehydrogenase [NADP] cytoplasmic (414 aa).

The residue at position 2 (Ser2) is an N-acetylserine. Tyr42 is subject to Phosphotyrosine. 75 to 77 contributes to the NADP(+) binding site; that stretch reads TIT. Thr77 provides a ligand contact to substrate. Lys81 is subject to N6-acetyllysine. Arg82 serves as a coordination point for NADP(+). Residues 94-100 and Arg109 each bind substrate; that span reads SPNGTIR. At Lys126 the chain carries N6-succinyllysine. The substrate site is built by Arg132 and Lys212. An N6-acetyllysine mark is found at Lys224 and Lys233. Asp252 lines the Mn(2+) pocket. Position 260 (Lys260) interacts with NADP(+). 2 residues coordinate Mn(2+): Asp275 and Asp279. Residue 310-315 coordinates NADP(+); that stretch reads GTVTRH. Position 321 is an N6-acetyllysine (Lys321). Asn328 lines the NADP(+) pocket. Ser389 is modified (phosphoserine). N6-succinyllysine is present on Lys400.

Belongs to the isocitrate and isopropylmalate dehydrogenases family. In terms of assembly, homodimer. It depends on Mg(2+) as a cofactor. Mn(2+) serves as cofactor. Acetylation at Lys-374 dramatically reduces catalytic activity.

It is found in the cytoplasm. It localises to the cytosol. It catalyses the reaction D-threo-isocitrate + NADP(+) = 2-oxoglutarate + CO2 + NADPH. In terms of biological role, catalyzes the NADP(+)-dependent oxidative decarboxylation of isocitrate (D-threo-isocitrate) to 2-ketoglutarate (2-oxoglutarate), which is required by other enzymes such as the phytanoyl-CoA dioxygenase. Plays a critical role in the generation of NADPH, an important cofactor in many biosynthesis pathways. May act as a corneal epithelial crystallin and may be involved in maintaining corneal epithelial transparency. In Ovis aries (Sheep), this protein is Isocitrate dehydrogenase [NADP] cytoplasmic (IDH1).